The following is a 90-amino-acid chain: UPF0298 protein YlbG (90 aa).

This sequence belongs to the UPF0298 family.

It localises to the cytoplasm. This Bacillus subtilis (strain 168) protein is UPF0298 protein YlbG (ylbG).